A 282-amino-acid polypeptide reads, in one-letter code: Phosphate import ATP-binding protein PstB (282 aa).

The span at 1–10 (MNMAESHLDP) shows a compositional bias: basic and acidic residues. The interval 1 to 24 (MNMAESHLDPSKLATGPAGAGAAT) is disordered. Residues 14-24 (ATGPAGAGAAT) are compositionally biased toward low complexity. Residues 36–277 (IEVKNLNFFY…PARKETEDYI (242 aa)) enclose the ABC transporter domain. 68–75 (GPSGCGKS) contacts ATP.

The protein belongs to the ABC transporter superfamily. Phosphate importer (TC 3.A.1.7) family. In terms of assembly, the complex is composed of two ATP-binding proteins (PstB), two transmembrane proteins (PstC and PstA) and a solute-binding protein (PstS).

It is found in the cell inner membrane. It carries out the reaction phosphate(out) + ATP + H2O = ADP + 2 phosphate(in) + H(+). Part of the ABC transporter complex PstSACB involved in phosphate import. Responsible for energy coupling to the transport system. This Burkholderia thailandensis (strain ATCC 700388 / DSM 13276 / CCUG 48851 / CIP 106301 / E264) protein is Phosphate import ATP-binding protein PstB.